The following is a 1003-amino-acid chain: X-linked retinitis pigmentosa GTPase regulator (1003 aa).

6 RCC1 repeats span residues 54–105, 106–158, 159–208, 209–261, 262–313, and 314–367; these read NKLY…STEG, GKVY…LTED, GELF…VTTE, GQLY…LTEK, AVYT…ITDM, and GLMY…FATP. Residue S418 is modified to Phosphoserine. Residues 460–495 form a disordered region; sequence TPEKEGLTQPEPDYFRDNMAKGKETDNSSATDSESL. The span at 472–485 shows a compositional bias: basic and acidic residues; it reads DYFRDNMAKGKETD. Residues 486 to 495 show a composition bias toward polar residues; that stretch reads NSSATDSESL. S520 is subject to Phosphoserine. Disordered regions lie at residues 625–657, 691–760, 794–932, and 968–1003; these read FKAIAKESDGGQSQKDPEAEETVSEKENELAEM, ESKD…TDQN, LSEI…DVKK, and AFKGNKKDANQNHMGQNHQDTSPPDMERRSKSCTIL. A compositionally biased stretch (basic and acidic residues) spans 693–715; the sequence is KDFVKDSRRNKQDVIFDSERESI. Composition is skewed to acidic residues over residues 716–726 and 797–821; these read EEPDSYLEGES and IPEEQEGAEDSEGSGIEEQEVEANE. The segment covering 827–848 has biased composition (basic and acidic residues); it reads AGKEEKEIEILSDDLTDRAEDH. The segment covering 849 to 867 has biased composition (acidic residues); the sequence is EFSEDEEPEDMAEELDEDL. Residues 882-896 are compositionally biased toward basic and acidic residues; sequence SLKKDETTKQEKRAI. Residues 913–924 show a composition bias toward low complexity; it reads SSSSEVLNDSES. Positions 978–989 are enriched in polar residues; it reads QNHMGQNHQDTS. C1000 carries the post-translational modification Cysteine methyl ester. C1000 carries S-geranylgeranyl cysteine lipidation. Residues 1001 to 1003 constitute a propeptide, removed in mature form; it reads TIL.

In terms of assembly, interacts with PDE6D. Interacts with RPGRIP1. Interacts with RPGRIP1L. PDE6D, RPGRIP1 and RPGRIP1L may compete for the same binding sites. Interacts with NPM1. Interacts with SMC1A and SMC3. Interacts with CEP290. Interacts with WHRN. Interacts with SPATA7. Interacts with RAB37 and RAB8A (in GDP-bound forms); functions as GEF for RAB37 and RAB8A. In terms of processing, prenylated. Isoform 1 is expressed exclusively in testis. Isoforms 2, 3 and 4 are widely expressed.

The protein resides in the golgi apparatus. The protein localises to the cell projection. It is found in the cilium. Its subcellular location is the cytoplasm. It localises to the cytoskeleton. The protein resides in the cilium basal body. The protein localises to the microtubule organizing center. It is found in the centrosome. Its subcellular location is the cilium axoneme. It localises to the flagellum axoneme. Its function is as follows. Acts as a guanine-nucleotide releasing factor (GEF) for RAB8A and RAB37 by promoting the conversion of inactive RAB-GDP to the active form RAB-GTP. GEF activity towards RAB8A may facilitate ciliary trafficking by modulating ciliary intracellular localization of RAB8A. GEF activity towards RAB37 maintains autophagic homeostasis and retinal function. Involved in photoreceptor integrity. May control cilia formation by regulating actin stress filaments and cell contractility. May be involved in microtubule organization and regulation of transport in primary cilia. May play a critical role in spermatogenesis and in intraflagellar transport processes. The chain is X-linked retinitis pigmentosa GTPase regulator (RPGR) from Canis lupus familiaris (Dog).